A 317-amino-acid chain; its full sequence is Transaldolase (317 aa).

K132 (schiff-base intermediate with substrate) is an active-site residue.

This sequence belongs to the transaldolase family. Type 1 subfamily. Homodimer.

The protein resides in the cytoplasm. It carries out the reaction D-sedoheptulose 7-phosphate + D-glyceraldehyde 3-phosphate = D-erythrose 4-phosphate + beta-D-fructose 6-phosphate. The protein operates within carbohydrate degradation; pentose phosphate pathway; D-glyceraldehyde 3-phosphate and beta-D-fructose 6-phosphate from D-ribose 5-phosphate and D-xylulose 5-phosphate (non-oxidative stage): step 2/3. Transaldolase is important for the balance of metabolites in the pentose-phosphate pathway. This Photorhabdus laumondii subsp. laumondii (strain DSM 15139 / CIP 105565 / TT01) (Photorhabdus luminescens subsp. laumondii) protein is Transaldolase.